A 78-amino-acid polypeptide reads, in one-letter code: Protein SlyX homolog (78 aa).

It belongs to the SlyX family.

The sequence is that of Protein SlyX homolog from Xylella fastidiosa (strain 9a5c).